We begin with the raw amino-acid sequence, 261 residues long: MEVVIVPDAKAGGELIAEAMAQLLRRKPDALLGVATGSTPLPVYEALAAKVRSGAVDTAQARIAQLDEYVGLPAEHPESYRSVLRREVLEPLGIDMDAFMGPDGTAADVQAACEAYDTALGGSGGVDLQLLGIGTDGHIGFNEPCSSLASRTRIKTLTEQTRIDNARFFDGDIEQVPHHVITQGIGTILEARHVVLLATGEGKADAVAASVEGPVAAVCPASALQLHPHATVVVDEAAASKLKLADYFRHTYAHKPDWQGI.

The active-site Proton acceptor; for enolization step is Asp67. Asp136 (for ring-opening step) is an active-site residue. The active-site Proton acceptor; for ring-opening step is His138. The active-site For ring-opening step is the Glu143.

The protein belongs to the glucosamine/galactosamine-6-phosphate isomerase family. NagB subfamily.

The catalysed reaction is alpha-D-glucosamine 6-phosphate + H2O = beta-D-fructose 6-phosphate + NH4(+). Its pathway is amino-sugar metabolism; N-acetylneuraminate degradation; D-fructose 6-phosphate from N-acetylneuraminate: step 5/5. In terms of biological role, catalyzes the reversible isomerization-deamination of glucosamine 6-phosphate (GlcN6P) to form fructose 6-phosphate (Fru6P) and ammonium ion. In Streptomyces coelicolor (strain ATCC BAA-471 / A3(2) / M145), this protein is Glucosamine-6-phosphate deaminase.